A 310-amino-acid chain; its full sequence is Alpha/beta hydrolase domain-containing protein 17A (310 aa).

Catalysis depends on charge relay system residues S190, D255, and H284. S307 is subject to Phosphoserine.

This sequence belongs to the AB hydrolase superfamily. ABHD17 family. Palmitoylated on cysteine residues located in a cysteine cluster at the N-terminus which promotes membrane localization. Palmitoylation is required for post-synaptic localization and for depalmitoylating activity towards DLG4/PSD95.

Its subcellular location is the cell membrane. It is found in the endosome membrane. The protein resides in the cell projection. The protein localises to the dendritic spine. It localises to the postsynaptic density membrane. The catalysed reaction is S-hexadecanoyl-L-cysteinyl-[protein] + H2O = L-cysteinyl-[protein] + hexadecanoate + H(+). Its activity is regulated as follows. Inhibited by palmostatin-B. Hydrolyzes fatty acids from S-acylated cysteine residues in proteins. Has depalmitoylating activity towards NRAS. Has depalmitoylating activity towards DLG4/PSD95. May have depalmitoylating activity towards MAP6. This is Alpha/beta hydrolase domain-containing protein 17A from Homo sapiens (Human).